Reading from the N-terminus, the 125-residue chain is MPTLNQLIRHGREEKRRTDRTRALDQCPQKQGVCLRVSTRTPKKPNSALRKIAKVRLSNRHDIFAYIPGEGHNLQEHSIVLIRGGRVKDLPGVKFHCIRGVKDLLGIPDRRKGRSKYGAEKPKSR.

Belongs to the universal ribosomal protein uS12 family.

It localises to the mitochondrion. Protein S12 is involved in the translation initiation step. The sequence is that of Small ribosomal subunit protein uS12m (RPS12) from Helianthus annuus (Common sunflower).